The following is a 333-amino-acid chain: Nucleoid-associated protein APJL_0454 (333 aa).

Belongs to the YejK family.

The protein resides in the cytoplasm. The protein localises to the nucleoid. This chain is Nucleoid-associated protein APJL_0454, found in Actinobacillus pleuropneumoniae serotype 3 (strain JL03).